We begin with the raw amino-acid sequence, 197 residues long: RNA-binding protein with multiple splicing (197 aa).

Met1 carries the N-acetylmethionine modification. Position 12 is a phosphothreonine (Thr12). An RRM domain is found at 24 to 101 (RTLFVSGLPL…QTLRLEFAKA (78 aa)). The segment at 98–105 (FAKANTKM) is interaction with RNA. Thr113 carries the phosphothreonine modification.

As to quaternary structure, homodimer; each protein chain binds one RNA molecule via the external surface of the homodimer. Interacts with RNA binding proteins MBNL1, RBFOX2, RBM4 and RBM14; the interaction allows cooperative assembly of stable cell-specific alternative splicing regulatory complexes. Also interacts with RBM47, MATR3 and ESRP2. Interacts with SMAD2, SMAD3 and SMAD4; the interactions are direct. In terms of tissue distribution, mRNA expressed in developing heart, with significantly higher expression in the atria relative to the ventricles.

The protein resides in the nucleus. It localises to the cytoplasm. The protein localises to the stress granule. Its subcellular location is the P-body. Its function is as follows. RNA binding protein that mediates the regulation of pre-mRNA alternative splicing (AS). Acts either as activator (FLNB, HSPG2, LIPA1, MYOCD, PTPRF and PPFIBP1) or repressor (TPM1, ACTN1, ITGA7, PIEZO1, LSM14B, MBNL1 and MBML2) of splicing events on specific pre-mRNA targets. Together with RNA binding proteins RBFOX2 and MBNL1/2, activates a splicing program associated with differentiated contractile vascular smooth muscle cells (SMC) by regulating AS of numerous pre-mRNA involved in actin cytoskeleton and focal adhesion machineries, suggesting a role in promoting a cell differentiated state. Binds to introns, exons and 3'-UTR associated with tandem CAC trinucleotide motifs separated by a variable spacer region, at a minimum as a dimer. The minimal length of RNA required for RBPMS-binding tandem CAC motifs is 15 nt, with spacing ranging from 1 to 9 nt. Can also bind to CA dinucleotide repeats. Mediates repression of TPM1 exon 3 by binding to CAC tandem repeats in the flanking intronic regions, followed by higher-order oligomerization and heterotypic interactions with other splicing regulators including MBNL1 and RBFOX2, which prevents assembly of ATP-dependent splicing complexes. This is RNA-binding protein with multiple splicing from Mus musculus (Mouse).